A 106-amino-acid chain; its full sequence is Tapetal oleosin GRP-19 (106 aa).

3 helical membrane-spanning segments follow: residues 14-34 (ALALLTFAGITLGGSVVACII), 37-57 (PLFVIFSPVLVPATIATTLLA), and 58-78 (SGFTASGSFGATAFTILSWLY). The tract at residues 84–106 (RDLPKIPGLTPPAPASNPAGSGV) is disordered.

It belongs to the oleosin family. In terms of processing, proteolytically cleaved following anther tapetal breakdown. In terms of tissue distribution, present in pollen (at protein level). Inflorescence-specific expression, especially in flowers florets.

It localises to the secreted. Its subcellular location is the extracellular space. The protein localises to the extracellular matrix. The protein resides in the pollen coat. It is found in the lipid droplet. It localises to the membrane. In terms of biological role, lipid-binding oleosin involved in anther tapetum development, especially for the physiology of tapetosomes. Also implicated in the formation of pollen coat. The sequence is that of Tapetal oleosin GRP-19 from Arabidopsis thaliana (Mouse-ear cress).